A 584-amino-acid chain; its full sequence is Mitochondrial sodium/calcium exchanger protein (584 aa).

Positions 1 to 26 (MAGRRLNLRWALSVLCVLLMAETVSG) are cleaved as a signal peptide. Over 27–95 (TRGSSTGAHI…GIFCHFPPSL (69 aa)) the chain is Extracellular. Asn60 carries an N-linked (GlcNAc...) asparagine glycan. The chain crosses the membrane as a helical span at residues 96–116 (LPLAVTLYVSWLLYLFLILGV). The Cytoplasmic segment spans residues 117–140 (TAAKFFCPNLSAISTTLKLSHNVA). Residues 141–161 (GVTFLAFGNGAPDIFSALVAF) traverse the membrane as a helical segment. Residues 162 to 168 (SDPHTAG) lie on the Extracellular side of the membrane. Residues 169–189 (LALGALFGAGVLVTTVVAGGI) traverse the membrane as a helical segment. Over 190–200 (TILHPFMAASR) the chain is Cytoplasmic. Residues 201-221 (PFFRDIVFYMVAVFLTFLMLF) traverse the membrane as a helical segment. The Extracellular portion of the chain corresponds to 222–226 (RGRVT). A helical membrane pass occupies residues 227–247 (LAWALGYLGLYVFYVVTVILC). Residues 248 to 325 (TWIYQRQRRG…KWRRKSAYWK (78 aa)) are Cytoplasmic-facing. Ser258 bears the Phosphoserine; by PKA mark. Residues 326-346 (ALKVFKLPVEFLLLLTVPVVD) form a helical membrane-spanning segment. Topologically, residues 347–360 (PDKDDQNWKRPLNC) are extracellular. The helical transmembrane segment at 361–381 (LHLVISPLVVVLTLQSGTYGV) threads the bilayer. Residues 382-383 (YE) lie on the Cytoplasmic side of the membrane. Residues 384-404 (IGGLVPVWVVVVIAGTALASV) traverse the membrane as a helical segment. Residues 405 to 416 (TFFATSDSQPPR) are Extracellular-facing. Residues 417–437 (LHWLFAFLGFLTSALWINAAA) traverse the membrane as a helical segment. Residues 438-445 (TEVVNILR) are Cytoplasmic-facing. A helical transmembrane segment spans residues 446–466 (SLGVVFRLSNTVLGLTLLAWG). Topologically, residues 467–487 (NSIGDAFSDFTLARQGYPRMA) are extracellular. Residues 488 to 508 (FSACFGGIIFNILVGVGLGCL) traverse the membrane as a helical segment. The Cytoplasmic segment spans residues 509-524 (LQISRSHTEVKLEPDG). A helical transmembrane segment spans residues 525–545 (LLVWVLAGALGLSLVFSLVSV). The Extracellular portion of the chain corresponds to 546 to 558 (PLQCFQLSRVYGF). Residues 559–579 (CLLLFYLNFLVVALLTEFGVI) traverse the membrane as a helical segment. The Cytoplasmic segment spans residues 580 to 584 (HLKSM).

Belongs to the Ca(2+):cation antiporter (CaCA) (TC 2.A.19) family. SLC24A subfamily. Post-translationally, phosphorylation at Ser-258 by PKA prevents calcium overload. As to expression, present in pancreatic beta-cells (at protein level).

The protein localises to the mitochondrion inner membrane. It carries out the reaction Ca(2+)(in) + 3 Na(+)(out) = Ca(2+)(out) + 3 Na(+)(in). It catalyses the reaction 3 Li(+)(out) + Ca(2+)(in) = 3 Li(+)(in) + Ca(2+)(out). Its activity is regulated as follows. Inhibited by the sodium/calcium exchanger inhibitor CGP-37157. Strongly inhibited by zinc. Mitochondrial sodium/calcium antiporter that mediates sodium-dependent calcium efflux from mitochondrion, by mediating the exchange of 3 sodium ions per 1 calcium ion. Plays a central role in mitochondrial calcium homeostasis by mediating mitochondrial calcium extrusion: calcium efflux is essential for mitochondrial function and cell survival, notably in cardiomyocytes. Regulates rates of glucose-dependent insulin secretion in pancreatic beta-cells during the first phase of insulin secretion: acts by mediating efflux of calcium from mitochondrion, thereby affecting cytoplasmic calcium responses. Required for store-operated Ca(2+) entry (SOCE) and Ca(2+) release-activated Ca(2+) (CRAC) channel regulation: sodium transport by SLC8B1 leads to promote calcium-shuttling that modulates mitochondrial redox status, thereby regulating SOCE activity. Involved in B-lymphocyte chemotaxis. Able to transport Ca(2+) in exchange of either Li(+) or Na(+), explaining how Li(+) catalyzes Ca(2+) exchange. In contrast to other members of the family its function is independent of K(+). This is Mitochondrial sodium/calcium exchanger protein from Homo sapiens (Human).